The chain runs to 275 residues: uncharacterized protein (275 aa).

Residues 20 to 22 (RGQ), 41 to 42 (DI), 80 to 81 (DV), and N107 contribute to the NAD(+) site. S160 contributes to the substrate binding site. The active-site Proton acceptor is the Y173. NAD(+) is bound by residues K177 and 206–208 (VET).

The protein belongs to the short-chain dehydrogenases/reductases (SDR) family.

This is an uncharacterized protein from Mycolicibacterium paratuberculosis (strain ATCC BAA-968 / K-10) (Mycobacterium paratuberculosis).